The primary structure comprises 204 residues: Holliday junction branch migration complex subunit RuvA (204 aa).

Positions 1–64 (MIGKLKGTID…EDQLKLFGFM (64 aa)) are domain I. The interval 65-143 (TALEREWFNL…AFAGEAINIA (79 aa)) is domain II. The flexible linker stretch occupies residues 144–151 (LKQELGEG). The tract at residues 152 to 204 (VAAAPVADAVSALTNLGYSRDQAANAVAAAMKTAGDDADSAKLIRLGLKELAR) is domain III.

This sequence belongs to the RuvA family. As to quaternary structure, homotetramer. Forms an RuvA(8)-RuvB(12)-Holliday junction (HJ) complex. HJ DNA is sandwiched between 2 RuvA tetramers; dsDNA enters through RuvA and exits via RuvB. An RuvB hexamer assembles on each DNA strand where it exits the tetramer. Each RuvB hexamer is contacted by two RuvA subunits (via domain III) on 2 adjacent RuvB subunits; this complex drives branch migration. In the full resolvosome a probable DNA-RuvA(4)-RuvB(12)-RuvC(2) complex forms which resolves the HJ.

The protein resides in the cytoplasm. The RuvA-RuvB-RuvC complex processes Holliday junction (HJ) DNA during genetic recombination and DNA repair, while the RuvA-RuvB complex plays an important role in the rescue of blocked DNA replication forks via replication fork reversal (RFR). RuvA specifically binds to HJ cruciform DNA, conferring on it an open structure. The RuvB hexamer acts as an ATP-dependent pump, pulling dsDNA into and through the RuvAB complex. HJ branch migration allows RuvC to scan DNA until it finds its consensus sequence, where it cleaves and resolves the cruciform DNA. The protein is Holliday junction branch migration complex subunit RuvA of Rhizobium leguminosarum bv. trifolii (strain WSM2304).